Consider the following 799-residue polypeptide: Zinc finger protein 227 (799 aa).

Residues 23–94 enclose the KRAB domain; it reads VTFKDVAVVF…ETETQRSSKH (72 aa). C2H2-type zinc fingers lie at residues 250 to 272, 269 to 291, 324 to 346, 352 to 374, 380 to 402, 408 to 430, 436 to 458, 464 to 486, 492 to 514, 520 to 542, 548 to 570, 576 to 598, 604 to 626, 632 to 654, 660 to 682, 688 to 710, 716 to 738, 744 to 766, and 772 to 794; these read HPCG…PNVH, PNVH…QRIH, YRCD…YRTH, YKCE…QRVH, YKCD…RRVH, YKCE…FRVH, YKCK…QNVH, FKCE…QRVH, YRCD…QVIH, YKCG…QRVH, YKCD…QRGH, HICE…LGVH, and YKCD…QKVH.

This sequence belongs to the krueppel C2H2-type zinc-finger protein family.

It localises to the nucleus. Functionally, may be involved in transcriptional regulation. The protein is Zinc finger protein 227 (ZNF227) of Homo sapiens (Human).